Consider the following 154-residue polypeptide: Large ribosomal subunit protein uL13 (154 aa).

The disordered stretch occupies residues 132–154; the sequence is PHEAQQPETLDVGAMNRKNKRAA.

The protein belongs to the universal ribosomal protein uL13 family. Part of the 50S ribosomal subunit.

This protein is one of the early assembly proteins of the 50S ribosomal subunit, although it is not seen to bind rRNA by itself. It is important during the early stages of 50S assembly. This Rhodopseudomonas palustris (strain HaA2) protein is Large ribosomal subunit protein uL13.